The primary structure comprises 153 residues: FAD synthase (153 aa).

Residues 9–10 (TF), 14–17 (HPGH), Asn-92, and Tyr-119 contribute to the ATP site.

Belongs to the archaeal FAD synthase family. As to quaternary structure, homodimer. A divalent metal cation is required as a cofactor.

The enzyme catalyses FMN + ATP + H(+) = FAD + diphosphate. It participates in cofactor biosynthesis; FAD biosynthesis; FAD from FMN: step 1/1. Its function is as follows. Catalyzes the transfer of the AMP portion of ATP to flavin mononucleotide (FMN) to produce flavin adenine dinucleotide (FAD) coenzyme. The protein is FAD synthase of Methanosphaerula palustris (strain ATCC BAA-1556 / DSM 19958 / E1-9c).